Reading from the N-terminus, the 484-residue chain is Putative amidase AmiA2 (484 aa).

Catalysis depends on charge relay system residues lysine 93 and serine 167. The Acyl-ester intermediate role is filled by serine 191.

This sequence belongs to the amidase family.

The enzyme catalyses a monocarboxylic acid amide + H2O = a monocarboxylate + NH4(+). The chain is Putative amidase AmiA2 (amiA2) from Mycobacterium bovis (strain ATCC BAA-935 / AF2122/97).